We begin with the raw amino-acid sequence, 179 residues long: Apoptosis regulator Bcl-2 homolog (179 aa).

The short motif at 76–95 (ELFKDLINWGRICGFIVFSA) is the BH1 element. The BH2 signature appears at 126 to 141 (PWMISHGGQEEFLAFS).

The protein belongs to the Bcl-2 family. Interacts with host BECN1 (via BH3 homology domain); this interaction allows the virus to inhibit BECN1, and thus autophagy. Interacts with host BID. Interacts with host BAX.

It is found in the host mitochondrion. The protein localises to the host endoplasmic reticulum. In terms of biological role, suppresses apoptosis in host cell to promote the viral replication. Has the ability to potentially bind to all the members of the proapoptotic Bcl-2 family. Inhibits autophagy by interacting with host Beclin 1 (BECN1). This is Apoptosis regulator Bcl-2 homolog from African swine fever virus (isolate Pig/Kenya/KEN-50/1950) (ASFV).